The chain runs to 101 residues: Large ribosomal subunit protein bL28 (101 aa).

This sequence belongs to the bacterial ribosomal protein bL28 family.

This chain is Large ribosomal subunit protein bL28, found in Rhodopseudomonas palustris (strain BisB5).